A 292-amino-acid polypeptide reads, in one-letter code: Ventral anterior homeobox 2 (292 aa).

Over residues 1 to 36 the composition is skewed to basic and acidic residues; that stretch reads MGDGGAERDRGPKRREEPGGRSGCRGEHRGAEDLRA. The tract at residues 1–74 is disordered; the sequence is MGDGGAERDR…DGQQALGETD (74 aa). Residues 38 to 55 are compositionally biased toward polar residues; that stretch reads TGSTSPREIAGTSASSPA. A DNA-binding region (homeobox) is located at residues 102–161; sequence PKRTRTSFTAEQLYRLEMEFQRCQYVVGRERTELARQLNLSETQVKVWFQNRRTKQKKDQ. The interval 212 to 241 is disordered; that stretch reads AGHRGTSLGDPRNSSQRLNPMPSASASSPL.

This sequence belongs to the EMX homeobox family.

It localises to the nucleus. In terms of biological role, transcription factor that may function in dorsoventral specification of the forebrain. Regulates the expression of Wnt signaling antagonists including the expression of a truncated TCF7L2 isoform that cannot bind CTNNB1 and acts therefore as a potent dominant-negative Wnt antagonist. Plays a crucial role in eye development and, in particular, in the specification of the ventral optic vesicle. May be a regulator of axial polarization in the retina. This chain is Ventral anterior homeobox 2 (Vax2), found in Rattus norvegicus (Rat).